A 158-amino-acid chain; its full sequence is Transcription elongation factor GreA (158 aa).

The stretch at 14-76 (VKKLEEELEY…QIENMLKNAN (63 aa)) forms a coiled coil.

This sequence belongs to the GreA/GreB family.

Functionally, necessary for efficient RNA polymerase transcription elongation past template-encoded arresting sites. The arresting sites in DNA have the property of trapping a certain fraction of elongating RNA polymerases that pass through, resulting in locked ternary complexes. Cleavage of the nascent transcript by cleavage factors such as GreA or GreB allows the resumption of elongation from the new 3'terminus. GreA releases sequences of 2 to 3 nucleotides. The chain is Transcription elongation factor GreA from Clostridium acetobutylicum (strain ATCC 824 / DSM 792 / JCM 1419 / IAM 19013 / LMG 5710 / NBRC 13948 / NRRL B-527 / VKM B-1787 / 2291 / W).